We begin with the raw amino-acid sequence, 334 residues long: MAEARRLPPPLPPRLDWFVHTQADLLAQSGIPEWFHGTISREAAENMLESQPLGTFLIRVSHSHVGYTLSYKAQTCCRHFMVKLSEDGTCAFAGDHMTHASLHALVTFHQQKPIRPFGELLTQACGQEDPANVDYEDLFLYSNALVQDAESQILRTEVQRSSCPPEEASERKPSTTTKGEFASASCSPKALFEDSGQKLWKNLRSLPQTSQRVKQRLTSHLLAMNLLGDARQVAQQHHSPVTRAFSWDSTSHSEDSCAATTSLQNPAEPQALRGREATFRDSRPASWRKAFSGVKAWRGKVVRALSAQEPVDFPEAQGWLPEEYLPPPPFAPGY.

One can recognise an SH2 domain in the interval 34–125 (WFHGTISREA…PFGELLTQAC (92 aa)). 2 disordered regions span residues 157–181 (EVQR…KGEF) and 254–280 (EDSC…ATFR). The segment covering 258–267 (AATTSLQNPA) has biased composition (polar residues).

As to quaternary structure, interacts with FES and TNK2. In terms of processing, may be phosphorylated by FES and ACK1. As to expression, predominantly expressed in spleen and thymus. Appears not to be expressed in heart, brain, liver, kidney, embryo, lung and ovary.

It localises to the cytoplasm. It is found in the mitochondrion. Adapter protein involved in tyrosine kinase and CD28 signaling. May be a modulator of the apoptotic response through its ability to affect mitochondrial stability. The sequence is that of Hematopoietic SH2 domain-containing protein (Hsh2d) from Mus musculus (Mouse).